Here is a 402-residue protein sequence, read N- to C-terminus: Multidrug resistance protein MdtH (402 aa).

At 1 to 12 (MSRVSQARNLGK) the chain is on the cytoplasmic side. A helical membrane pass occupies residues 13-33 (YFLLIDNMLVVLGFFVVFPLI). Topologically, residues 34-98 (SIRFVDQMGW…GFATMGIAHE (65 aa)) are periplasmic. Residues 99 to 116 (PWLLWFSCLLSGLGGTLF) form a helical membrane-spanning segment. Over 117–138 (DPPRSALVVKLIRPQQRGRFFS) the chain is Cytoplasmic. Residues 139-159 (LLMMQDSAGAVIGALLGSWLL) traverse the membrane as a helical segment. Residues 160 to 164 (QYDFR) lie on the Periplasmic side of the membrane. A helical transmembrane segment spans residues 165–185 (LVCATGAVLFVLCAAFNAWLL). Over 186–213 (PAWKLSTVRTPVREGMTRVMRDKRFVTY) the chain is Cytoplasmic. A helical transmembrane segment spans residues 214–234 (VLTLAGYYMLAVQVMLMLPIM). The Periplasmic portion of the chain corresponds to 235–243 (VNDVAGAPS). A helical transmembrane segment spans residues 244–264 (AVKWMYAIEACLSLTLLYPIA). Residues 265–276 (RWSEKHFRLEHR) lie on the Cytoplasmic side of the membrane. Residues 277–297 (LMAGLLIMSLSMMPVGMVSGL) form a helical membrane-spanning segment. Residues 298-299 (QQ) lie on the Periplasmic side of the membrane. Residues 300-320 (LFTLICLFYIGSIIAEPARET) form a helical membrane-spanning segment. The Cytoplasmic portion of the chain corresponds to 321 to 339 (LSASLADARARGSYMGFSR). Residues 340–360 (LGLAIGGAIGYIGGGWLFDLG) form a helical membrane-spanning segment. Residues 361-367 (KSAHQPE) are Periplasmic-facing. A helical transmembrane segment spans residues 368 to 388 (LPWMMLGIIGIFTFLALGWQF). Residues 389-402 (SQKRTARRLLERDA) lie on the Cytoplasmic side of the membrane.

This sequence belongs to the major facilitator superfamily. DHA1 family. MdtH (TC 2.A.1.2.21) subfamily.

Its subcellular location is the cell inner membrane. In terms of biological role, confers resistance to norfloxacin and enoxacin. This Escherichia coli O7:K1 (strain IAI39 / ExPEC) protein is Multidrug resistance protein MdtH.